The following is a 96-amino-acid chain: Complement inhibitor RaCI4 (96 aa).

The N-terminal stretch at 1–24 (MSAFNIFALVVVVCALMINECCTS) is a signal peptide. 3 disulfides stabilise this stretch: cysteine 37-cysteine 61, cysteine 42-cysteine 63, and cysteine 57-cysteine 78.

This sequence belongs to the RaCI family. Expressed in salivary glands.

It localises to the secreted. In terms of biological role, complement inhibitor. Prevents complement-mediated C5 activation by binding to C5. Binds C5 at a different binding site than the other tick complement inhibitors OmCI and CirpT1, and the drug eculizumab. Inhibits complement in human and guinea pig but not in other species tested (rabbit, rat, mouse, and pig). This Hyalomma rufipes (Tick) protein is Complement inhibitor RaCI4.